Here is a 428-residue protein sequence, read N- to C-terminus: MSAIVDIIGREILDSRGNPTVECDVLLESGAMGRAAVPSGASTGTREAIELRDGDKNRYFGKGVLRAVENLNTEISEALMGLDAQEQTFVDRTLIELDGTDSKERLGANAMLAASMAVARAAADESGLSLYRYFGGSGPMSMPVPMMNVINGGAHANNTLDLQELMILPVGAASFREALRWGAEVFHVLKKLIHAQGMSTAVGDEGGFAPNLANHEAAIQLILKAITEAGYEPGTQIALGLDCASSEFYRDGKYTLAGEGGVSLSSQEFANLLATWCDKYPIISIEDGMAENDWDGWKLLTDQLGKKVQLVGDDLFVTNTRILREGIQKGVANSILIKINQIGTLTETFAAIEMAKRAGYTAVVSHRSGETEDSTIADIAVATNAMQIKTGSLSRSDRMAKYNQLLRIEEELAEVASYPGIEAFYNLR.

Position 163 (glutamine 163) interacts with (2R)-2-phosphoglycerate. The active-site Proton donor is glutamate 205. Mg(2+) is bound by residues aspartate 242, glutamate 286, and aspartate 313. (2R)-2-phosphoglycerate contacts are provided by lysine 338, arginine 367, serine 368, and lysine 389. The active-site Proton acceptor is the lysine 338.

It belongs to the enolase family. Requires Mg(2+) as cofactor.

The protein localises to the cytoplasm. The protein resides in the secreted. It localises to the cell surface. It catalyses the reaction (2R)-2-phosphoglycerate = phosphoenolpyruvate + H2O. The protein operates within carbohydrate degradation; glycolysis; pyruvate from D-glyceraldehyde 3-phosphate: step 4/5. Catalyzes the reversible conversion of 2-phosphoglycerate (2-PG) into phosphoenolpyruvate (PEP). It is essential for the degradation of carbohydrates via glycolysis. This is Enolase from Bordetella avium (strain 197N).